Consider the following 406-residue polypeptide: Olfactomedin-like protein 3 (406 aa).

The first 21 residues, M1–G21, serve as a signal peptide directing secretion. Residues Q22–N101 adopt a coiled-coil conformation. An Olfactomedin-like domain is found at D134–K401. C135 and C328 are joined by a disulfide. N-linked (GlcNAc...) asparagine glycosylation is present at N248.

This sequence belongs to the OLFML3 family.

The protein localises to the secreted. Secreted scaffold protein that plays an essential role in dorsoventral patterning during early development. Stabilizes axial formation by restricting chordin (CHRD) activity on the dorsal side. Acts by facilitating the association between the tolloid proteases and their substrate chordin (CHRD), leading to enhance chordin (CHRD) degradation. May have matrix-related function involved in placental and embryonic development, or play a similar role in other physiological processes. The chain is Olfactomedin-like protein 3 (Olfml3) from Rattus norvegicus (Rat).